A 348-amino-acid chain; its full sequence is Phospho-2-dehydro-3-deoxyheptonate aldolase, Trp-sensitive (348 aa).

Belongs to the class-I DAHP synthase family.

The enzyme catalyses D-erythrose 4-phosphate + phosphoenolpyruvate + H2O = 7-phospho-2-dehydro-3-deoxy-D-arabino-heptonate + phosphate. Its pathway is metabolic intermediate biosynthesis; chorismate biosynthesis; chorismate from D-erythrose 4-phosphate and phosphoenolpyruvate: step 1/7. Stereospecific condensation of phosphoenolpyruvate (PEP) and D-erythrose-4-phosphate (E4P) giving rise to 3-deoxy-D-arabino-heptulosonate-7-phosphate (DAHP). The polypeptide is Phospho-2-dehydro-3-deoxyheptonate aldolase, Trp-sensitive (aroH) (Buchnera aphidicola subsp. Baizongia pistaciae (strain Bp)).